Consider the following 352-residue polypeptide: UDP-N-acetylglucosamine--N-acetylmuramyl-(pentapeptide) pyrophosphoryl-undecaprenol N-acetylglucosamine transferase 3 (352 aa).

Residues 11 to 13 (SAG), arginine 164, serine 194, and glutamine 289 contribute to the UDP-N-acetyl-alpha-D-glucosamine site.

Belongs to the glycosyltransferase 28 family. MurG subfamily.

The protein resides in the cell membrane. It carries out the reaction di-trans,octa-cis-undecaprenyl diphospho-N-acetyl-alpha-D-muramoyl-L-alanyl-D-glutamyl-meso-2,6-diaminopimeloyl-D-alanyl-D-alanine + UDP-N-acetyl-alpha-D-glucosamine = di-trans,octa-cis-undecaprenyl diphospho-[N-acetyl-alpha-D-glucosaminyl-(1-&gt;4)]-N-acetyl-alpha-D-muramoyl-L-alanyl-D-glutamyl-meso-2,6-diaminopimeloyl-D-alanyl-D-alanine + UDP + H(+). It functions in the pathway cell wall biogenesis; peptidoglycan biosynthesis. Functionally, cell wall formation. Catalyzes the transfer of a GlcNAc subunit on undecaprenyl-pyrophosphoryl-MurNAc-pentapeptide (lipid intermediate I) to form undecaprenyl-pyrophosphoryl-MurNAc-(pentapeptide)GlcNAc (lipid intermediate II). The polypeptide is UDP-N-acetylglucosamine--N-acetylmuramyl-(pentapeptide) pyrophosphoryl-undecaprenol N-acetylglucosamine transferase 3 (Bacillus thuringiensis (strain Al Hakam)).